The primary structure comprises 136 residues: Small ribosomal subunit protein uS8c (136 aa).

Belongs to the universal ribosomal protein uS8 family. Part of the 30S ribosomal subunit.

The protein resides in the plastid. It localises to the chloroplast. One of the primary rRNA binding proteins, it binds directly to 16S rRNA central domain where it helps coordinate assembly of the platform of the 30S subunit. The protein is Small ribosomal subunit protein uS8c (rps8) of Saccharum officinarum (Sugarcane).